The sequence spans 131 residues: Small ribosomal subunit protein bS6 (131 aa).

Positions 98–131 (EASPMVKAKDERRERRDDFANETADDADAGDSEE) are disordered. Over residues 104–116 (KAKDERRERRDDF) the composition is skewed to basic and acidic residues. Residues 120-131 (TADDADAGDSEE) show a composition bias toward acidic residues.

The protein belongs to the bacterial ribosomal protein bS6 family.

Its function is as follows. Binds together with bS18 to 16S ribosomal RNA. In Citrobacter koseri (strain ATCC BAA-895 / CDC 4225-83 / SGSC4696), this protein is Small ribosomal subunit protein bS6.